The sequence spans 99 residues: C-C motif chemokine 17 (99 aa).

An N-terminal signal peptide occupies residues 1-23; sequence MIPLKMLLLVTLLLGASLQVTHA. 2 disulfides stabilise this stretch: C33-C57 and C34-C73.

It belongs to the intercrine beta (chemokine CC) family. Expressed in thymus, spleen, lymph node, lung and heart.

It localises to the secreted. Functionally, chemokine, which displays chemotactic activity for T lymphocytes, preferentially Th2 cells, but not monocytes or granulocytes. Therefore plays an important role in a wide range of inflammatory and immunological processes. Acts by binding to CCR4 at T-cell surface. Mediates GM-CSF/CSF2-driven pain and inflammation. In the brain, required to maintain the typical, highly branched morphology of hippocampal microglia under homeostatic conditions. May be important for the appropriate adaptation of microglial morphology and synaptic plasticity to acute lipopolysaccharide (LPS)-induced neuroinflammation. Plays a role in wound healing, mainly by inducing fibroblast migration into the wound. This chain is C-C motif chemokine 17 (CCL17), found in Canis lupus familiaris (Dog).